A 248-amino-acid polypeptide reads, in one-letter code: Triosephosphate isomerase (248 aa).

Lys-12 provides a ligand contact to substrate. His-94 (electrophile) is an active-site residue. Catalysis depends on Glu-165, which acts as the Proton acceptor.

The protein belongs to the triosephosphate isomerase family. Homodimer.

The enzyme catalyses D-glyceraldehyde 3-phosphate = dihydroxyacetone phosphate. The protein operates within carbohydrate biosynthesis; gluconeogenesis. It participates in carbohydrate degradation; glycolysis; D-glyceraldehyde 3-phosphate from glycerone phosphate: step 1/1. The chain is Triosephosphate isomerase (Tpi) from Bombyx mori (Silk moth).